The following is an 898-amino-acid chain: Phosphoenolpyruvate carboxylase (898 aa).

Residues His-138 and Lys-561 contribute to the active site.

Belongs to the PEPCase type 1 family. It depends on Mg(2+) as a cofactor.

The enzyme catalyses oxaloacetate + phosphate = phosphoenolpyruvate + hydrogencarbonate. In terms of biological role, forms oxaloacetate, a four-carbon dicarboxylic acid source for the tricarboxylic acid cycle. This is Phosphoenolpyruvate carboxylase from Streptococcus pneumoniae serotype 2 (strain D39 / NCTC 7466).